The sequence spans 358 residues: Protein Wnt-8 (358 aa).

An N-terminal signal peptide occupies residues 1–22 (MQNTTLFILATLLIFCPFFTAS). Cysteines 55 and 66 form a disulfide. An N-linked (GlcNAc...) asparagine glycan is attached at asparagine 104. Disulfide bonds link cysteine 105–cysteine 113, cysteine 115–cysteine 133, cysteine 181–cysteine 195, cysteine 183–cysteine 190, cysteine 260–cysteine 298, cysteine 276–cysteine 291, cysteine 295–cysteine 337, cysteine 313–cysteine 328, cysteine 315–cysteine 325, and cysteine 320–cysteine 321. Residue serine 187 is the site of O-palmitoleoyl serine attachment. Residues asparagine 263 and asparagine 282 are each glycosylated (N-linked (GlcNAc...) asparagine).

Belongs to the Wnt family. In terms of assembly, homooligomer; disulfide-linked, leading to inactivation. Interacts with the long chain of cer1. Palmitoleoylation is required for efficient binding to frizzled receptors. Depalmitoleoylation leads to Wnt signaling pathway inhibition. In terms of processing, proteolytic processing by tiki1 and tiki2 promotes oxidation and formation of large disulfide-bond oligomers, leading to inactivation of wnt8.

Its subcellular location is the secreted. The protein resides in the extracellular space. It is found in the extracellular matrix. In terms of biological role, ligand for members of the frizzled family of seven transmembrane receptors. Plays a role in ventral mesodermal patterning during embryogenesis. Mimics Nieuwkoop center activity. Causes dorsal mesodermal differentiation of animal cap ectoderm when coexpressed with noggin and nuclear, sequence-specific DNA-binding protein xBra. None of these molecules causes dorsal mesoderm formation when expressed alone. The chain is Protein Wnt-8 (wnt8) from Xenopus laevis (African clawed frog).